The following is a 426-amino-acid chain: Tol-Pal system protein TolB (426 aa).

The signal sequence occupies residues 1 to 24 (MKLKSRYTSLISVVSIFFSSMVMA).

This sequence belongs to the TolB family. As to quaternary structure, the Tol-Pal system is composed of five core proteins: the inner membrane proteins TolA, TolQ and TolR, the periplasmic protein TolB and the outer membrane protein Pal. They form a network linking the inner and outer membranes and the peptidoglycan layer.

It is found in the periplasm. In terms of biological role, part of the Tol-Pal system, which plays a role in outer membrane invagination during cell division and is important for maintaining outer membrane integrity. The chain is Tol-Pal system protein TolB from Haemophilus ducreyi (strain 35000HP / ATCC 700724).